We begin with the raw amino-acid sequence, 261 residues long: Cytochrome c oxidase subunit 3 (261 aa).

Topologically, residues 1–15 (MAHQAHAYHMVDPSP) are mitochondrial matrix. The helical transmembrane segment at 16 to 34 (WPLTGAIAALLMTSGLAIW) threads the bilayer. At 35–40 (FHFHST) the chain is on the mitochondrial intermembrane side. A helical transmembrane segment spans residues 41–66 (TLMTLGLILLLLTMYQWWRDIIREGT). At 67-72 (FQGHHT) the chain is on the mitochondrial matrix side. The helical transmembrane segment at 73-105 (PPVQKGLRYGMILFITSEVFFFLGFFWAFYHSS) threads the bilayer. Topologically, residues 106–128 (LAPTPELGGCWPPTGITPLDPFE) are mitochondrial intermembrane. The chain crosses the membrane as a helical span at residues 129–152 (VPLLNTAVLLASGVTVTWAHHSIM). Topologically, residues 153–155 (EGE) are mitochondrial matrix. The chain crosses the membrane as a helical span at residues 156-183 (RKQAIQSLALTILLGFYFTALQAMEYYE). At 184 to 190 (APFTIAD) the chain is on the mitochondrial intermembrane side. Residues 191-223 (GVYGSTFFVATGFHGLHVIIGSTFLAVCLLRQI) form a helical membrane-spanning segment. The Mitochondrial matrix portion of the chain corresponds to 224–232 (QYHFTSEHH). Residues 233–256 (FGFEAAAWYWHFVDVVWLFLYVSI) traverse the membrane as a helical segment. Over 257–261 (YWWGS) the chain is Mitochondrial intermembrane.

The protein belongs to the cytochrome c oxidase subunit 3 family. In terms of assembly, component of the cytochrome c oxidase (complex IV, CIV), a multisubunit enzyme composed of 14 subunits. The complex is composed of a catalytic core of 3 subunits MT-CO1, MT-CO2 and MT-CO3, encoded in the mitochondrial DNA, and 11 supernumerary subunits COX4I, COX5A, COX5B, COX6A, COX6B, COX6C, COX7A, COX7B, COX7C, COX8 and NDUFA4, which are encoded in the nuclear genome. The complex exists as a monomer or a dimer and forms supercomplexes (SCs) in the inner mitochondrial membrane with NADH-ubiquinone oxidoreductase (complex I, CI) and ubiquinol-cytochrome c oxidoreductase (cytochrome b-c1 complex, complex III, CIII), resulting in different assemblies (supercomplex SCI(1)III(2)IV(1) and megacomplex MCI(2)III(2)IV(2)).

It is found in the mitochondrion inner membrane. It catalyses the reaction 4 Fe(II)-[cytochrome c] + O2 + 8 H(+)(in) = 4 Fe(III)-[cytochrome c] + 2 H2O + 4 H(+)(out). Functionally, component of the cytochrome c oxidase, the last enzyme in the mitochondrial electron transport chain which drives oxidative phosphorylation. The respiratory chain contains 3 multisubunit complexes succinate dehydrogenase (complex II, CII), ubiquinol-cytochrome c oxidoreductase (cytochrome b-c1 complex, complex III, CIII) and cytochrome c oxidase (complex IV, CIV), that cooperate to transfer electrons derived from NADH and succinate to molecular oxygen, creating an electrochemical gradient over the inner membrane that drives transmembrane transport and the ATP synthase. Cytochrome c oxidase is the component of the respiratory chain that catalyzes the reduction of oxygen to water. Electrons originating from reduced cytochrome c in the intermembrane space (IMS) are transferred via the dinuclear copper A center (CU(A)) of subunit 2 and heme A of subunit 1 to the active site in subunit 1, a binuclear center (BNC) formed by heme A3 and copper B (CU(B)). The BNC reduces molecular oxygen to 2 water molecules using 4 electrons from cytochrome c in the IMS and 4 protons from the mitochondrial matrix. This Carassius auratus (Goldfish) protein is Cytochrome c oxidase subunit 3 (mt-co3).